A 236-amino-acid polypeptide reads, in one-letter code: Purine nucleoside phosphorylase DeoD-type (236 aa).

Histidine 5 provides a ligand contact to a purine D-ribonucleoside. Phosphate is bound by residues glycine 21, arginine 25, arginine 44, and 88 to 91 (RVGT). A purine D-ribonucleoside-binding positions include 180 to 182 (EME) and 204 to 205 (SD). The active-site Proton donor is the aspartate 205.

It belongs to the PNP/UDP phosphorylase family. As to quaternary structure, homohexamer; trimer of homodimers.

The catalysed reaction is a purine D-ribonucleoside + phosphate = a purine nucleobase + alpha-D-ribose 1-phosphate. It catalyses the reaction a purine 2'-deoxy-D-ribonucleoside + phosphate = a purine nucleobase + 2-deoxy-alpha-D-ribose 1-phosphate. Its function is as follows. Catalyzes the reversible phosphorolytic breakdown of the N-glycosidic bond in the beta-(deoxy)ribonucleoside molecules, with the formation of the corresponding free purine bases and pentose-1-phosphate. This is Purine nucleoside phosphorylase DeoD-type from Shewanella sp. (strain MR-4).